An 85-amino-acid chain; its full sequence is Small ribosomal subunit protein uS15 (85 aa).

This sequence belongs to the universal ribosomal protein uS15 family. In terms of assembly, part of the 30S ribosomal subunit. Forms a bridge to the 50S subunit in the 70S ribosome, contacting the 23S rRNA.

In terms of biological role, one of the primary rRNA binding proteins, it binds directly to 16S rRNA where it helps nucleate assembly of the platform of the 30S subunit by binding and bridging several RNA helices of the 16S rRNA. Functionally, forms an intersubunit bridge (bridge B4) with the 23S rRNA of the 50S subunit in the ribosome. This is Small ribosomal subunit protein uS15 from Fusobacterium nucleatum subsp. nucleatum (strain ATCC 25586 / DSM 15643 / BCRC 10681 / CIP 101130 / JCM 8532 / KCTC 2640 / LMG 13131 / VPI 4355).